The sequence spans 85 residues: Small ribosomal subunit protein uS17 (85 aa).

It belongs to the universal ribosomal protein uS17 family. As to quaternary structure, part of the 30S ribosomal subunit.

In terms of biological role, one of the primary rRNA binding proteins, it binds specifically to the 5'-end of 16S ribosomal RNA. This is Small ribosomal subunit protein uS17 from Pasteurella multocida (strain Pm70).